The primary structure comprises 91 residues: DNA-binding protein HU (91 aa).

This sequence belongs to the bacterial histone-like protein family. As to quaternary structure, homodimer.

Histone-like DNA-binding protein which is capable of wrapping DNA to stabilize it, and thus to prevent its denaturation under extreme environmental conditions. The polypeptide is DNA-binding protein HU (hup) (Lactococcus lactis subsp. lactis (strain IL1403) (Streptococcus lactis)).